The primary structure comprises 738 residues: Adhesion G protein-coupled receptor L4 (738 aa).

The signal sequence occupies residues 1-19 (MRLLLLLVGLSTLLNHSYT). An EGF-like 1 domain is found at 20–56 (QNCKTPCLPNAKCEVLDEVAACFCSTGYTGNGITICE). The Extracellular segment spans residues 20-480 (QNCKTPCLPN…DYNILTRITQ (461 aa)). Disulfide bonds link Cys-22–Cys-32, Cys-26–Cys-41, Cys-43–Cys-55, Cys-61–Cys-73, Cys-67–Cys-82, Cys-84–Cys-105, Cys-111–Cys-123, Cys-117–Cys-132, and Cys-134–Cys-155. Residues 57-106 (DVDECNETSVCGDHAVCENTNGGFSCFCVEGYQTSTGKTQFTPNDGSYCQ) enclose the EGF-like 2; calcium-binding domain. Residue Asn-62 is glycosylated (N-linked (GlcNAc...) asparagine). Positions 107-156 (DVDECNETSVCGDHAVCENTNGGFSCFCVEGYQTSTGKTQFTPNDGSYCQ) constitute an EGF-like 3; calcium-binding domain. Asn-112 is a glycosylation site (N-linked (GlcNAc...) asparagine). 6 N-linked (GlcNAc...) asparagine glycosylation sites follow: Asn-175, Asn-226, Asn-297, Asn-421, Asn-429, and Asn-443. One can recognise a GAIN-B domain in the interval 292 to 467 (TQFDMNSTDL…AILMSPSTSI (176 aa)). 2 cysteine pairs are disulfide-bonded: Cys-417/Cys-449 and Cys-437/Cys-451. The segment at 417-467 (CAFWNYSVDDMNNGSWSSEGCELTYSNDTHTSCRCSHLTHFAILMSPSTSI) is GPS. A helical membrane pass occupies residues 481 to 501 (LGIIISLICLAICIFTFWFFS). Residues 502 to 522 (EIQSTRTTIHKNLCCSLFLAQ) are Cytoplasmic-facing. Residues 523–543 (LVFLVGININTNKLVCSIIAG) traverse the membrane as a helical segment. Residues 544 to 547 (LLHY) are Extracellular-facing. A helical transmembrane segment spans residues 548-568 (FFLAAFAWMCIEGIYLYLIVV). Topologically, residues 569–580 (GLIYNKGFLHKN) are cytoplasmic. The chain crosses the membrane as a helical span at residues 581 to 601 (FYIFGYLSPAVVVGFSASLGY). Residues 602–621 (RYYGTTKVCWLSTENNFIWS) lie on the Extracellular side of the membrane. A helical membrane pass occupies residues 622-642 (FIGPACLIILVNLLAFGVIIY). Topologically, residues 643–666 (KVFRHTAGLKPEVSCYENIRSCAR) are cytoplasmic. Residues 667-687 (GALALLFLLGTTWTFGVLHVV) traverse the membrane as a helical segment. Residues 688-694 (HASVVTA) lie on the Extracellular side of the membrane. Residues 695–715 (YLFTVSNAFQGMFIFLFLCVL) form a helical membrane-spanning segment. At 716 to 738 (SRKIQEEYYRLFKNVPCCFECLR) the chain is on the cytoplasmic side.

The protein belongs to the G-protein coupled receptor 2 family. Adhesion G-protein coupled receptor (ADGR) subfamily. In terms of assembly, heterodimer of 2 chains generated by proteolytic processing; the large extracellular N-terminal fragment and the membrane-bound C-terminal fragment predominantly remain associated and non-covalently linked. In terms of processing, proteolytically cleaved into 2 subunits, an extracellular alpha subunit and a seven-transmembrane subunit. Post-translationally, glycosylated. Abundantly expressed in heart, lung, and kidney. Less evident expression is observed in brain, skeletal muscle, liver and spleen. No expression is detected in testis.

The protein localises to the cell membrane. Functionally, endothelial orphan receptor that acts as a key regulator of angiogenesis. This Rattus norvegicus (Rat) protein is Adhesion G protein-coupled receptor L4 (Adgrl4).